A 310-amino-acid polypeptide reads, in one-letter code: Probable manganese-dependent inorganic pyrophosphatase (310 aa).

Positions 10, 14, 16, 75, 97, and 149 each coordinate Mn(2+).

It belongs to the PPase class C family. The cofactor is Mn(2+).

The protein localises to the cytoplasm. The catalysed reaction is diphosphate + H2O = 2 phosphate + H(+). The sequence is that of Probable manganese-dependent inorganic pyrophosphatase from Clostridium acetobutylicum (strain ATCC 824 / DSM 792 / JCM 1419 / IAM 19013 / LMG 5710 / NBRC 13948 / NRRL B-527 / VKM B-1787 / 2291 / W).